Here is a 130-residue protein sequence, read N- to C-terminus: Small ribosomal subunit protein uS8 (130 aa).

Belongs to the universal ribosomal protein uS8 family. In terms of assembly, part of the 30S ribosomal subunit. Contacts proteins S5 and S12.

Functionally, one of the primary rRNA binding proteins, it binds directly to 16S rRNA central domain where it helps coordinate assembly of the platform of the 30S subunit. This Pasteurella multocida (strain Pm70) protein is Small ribosomal subunit protein uS8.